Consider the following 179-residue polypeptide: DELTA-actitoxin-Afr1c (179 aa).

The tract at residues 1 to 29 (SAEVAGAIIDGASLTFDVLQTVLKALGDV) is N-terminal alpha-helix that contributes to the pore. An N-terminal region region spans residues 11-30 (GASLTFDVLQTVLKALGDVS). An an N-(acyl)-sphingosylphosphocholine-binding site is contributed by Arg-31. N-acetyl-D-glucosamine 6-sulfate-binding residues include Tyr-51 and Arg-53. An N-(acyl)-sphingosylphosphocholine-binding residues include Arg-53, Ser-54, Arg-79, Gly-85, Tyr-113, Ser-114, Trp-116, Tyr-133, Tyr-137, Tyr-138, Arg-144, and Gly-168. The tract at residues 105–120 (SIPFDYNLYSNWWNVK) is trp-rich region, which is important for the binding to lipid membrane. Tyr-138 is a binding site for N-acetyl-D-glucosamine 6-sulfate. Residues 144–146 (RGD) carry the Cell attachment site, crucial for protein stability motif.

Belongs to the actinoporin family. Sea anemone subfamily. As to quaternary structure, octamer or nonamer in membranes. Monomer in the soluble state.

It localises to the secreted. The protein resides in the nematocyst. It is found in the target cell membrane. Its function is as follows. Pore-forming toxin (PFT) that consists of a crown-shaped octamer or nonamer that forms cation-selective hydrophilic pores of about 1.5 nm (inside) and 13 nm (outside) and causes cytolysis. It causes cardiac stimulation. Also causes hemolysis (HC(50)=0.3 nM). Interestingly, the Phe-16 is crucial for hemolysis. Pore formation is a multi-step process that involves specific recognition of membrane sphingomyelin (but neither cholesterol nor phosphatidylcholine) using aromatic rich region and adjacent phosphocholine (POC) binding site, firm binding to the membrane (mainly driven by hydrophobic interactions) accompanied by the transfer of the N-terminal region to the lipid-water interface and finally pore formation after oligomerization of monomers. It is probable that a dimeric form is an assembly intermediate before the complete oligomerization. The formation of stable pores occurs only in vesicles composed of DOPC/SM (there is no oligomerization when the PFT is treated with vesicles of DOPC or SM alone). The transmembrane pore displays 8 lateral perforations, one at each subunit-subunit interface, partially occupied by the acyl-chain region of a bridging lipid. Each pore contains 24 lipid molecules, firmly bound to each subunit, that is, 3 lipids (L1, L2, L3, L4 and/or L5) are associated to each subunit. Lipid L1 bridges 2 subunits, whereas lipids L2 and L3 bind to sites at single subunit. The chain is DELTA-actitoxin-Afr1c from Actinia fragacea (Strawberry anemone).